The sequence spans 435 residues: Tryptophan--tRNA ligase (435 aa).

ATP is bound by residues 10 to 12 and 18 to 19; these read TTS and GN. The 'HIGH' region motif lies at 11–19; the sequence is TSGTPHLGN. Residue aspartate 143 coordinates L-tryptophan. Residues 155–157, leucine 195, and 202–206 each bind ATP; these read GRD and KMSKS. The 'KMSKS' region motif lies at 202–206; that stretch reads KMSKS.

Belongs to the class-I aminoacyl-tRNA synthetase family. In terms of assembly, homodimer.

The protein resides in the cytoplasm. It catalyses the reaction tRNA(Trp) + L-tryptophan + ATP = L-tryptophyl-tRNA(Trp) + AMP + diphosphate + H(+). Functionally, catalyzes the attachment of tryptophan to tRNA(Trp). This chain is Tryptophan--tRNA ligase, found in Xylella fastidiosa (strain Temecula1 / ATCC 700964).